We begin with the raw amino-acid sequence, 167 residues long: uncharacterized protein (167 aa).

Over residues 1 to 13 the composition is skewed to basic and acidic residues; the sequence is MQGDIRRKKDLLP. 2 disordered regions span residues 1-26 and 67-167; these read MQGD…SRRR and ESHS…ILDN. Over residues 71-80 the composition is skewed to low complexity; it reads SDVSASASDH. The segment covering 102–156 has biased composition (basic and acidic residues); sequence VPKEKFNNEVAKQQEVKNLENDLKPQIDSEKQKQINKDKKEQKQQLQKEKQDLAK.

This is an uncharacterized protein from Saccharomyces cerevisiae (strain ATCC 204508 / S288c) (Baker's yeast).